The following is a 337-amino-acid chain: Eukaryotic translation initiation factor 3 subunit H (337 aa).

One can recognise an MPN domain in the interval 21 to 153; sequence VQCDGLAVMK…LKAYRLTPQA (133 aa).

This sequence belongs to the eIF-3 subunit H family. In terms of assembly, component of the eukaryotic translation initiation factor 3 (eIF-3) complex. The eIF-3 complex interacts with pix. Interacts with mxt.

It is found in the cytoplasm. Functionally, component of the eukaryotic translation initiation factor 3 (eIF-3) complex, which is involved in protein synthesis of a specialized repertoire of mRNAs and, together with other initiation factors, stimulates binding of mRNA and methionyl-tRNAi to the 40S ribosome. The eIF-3 complex specifically targets and initiates translation of a subset of mRNAs involved in cell proliferation. In Drosophila pseudoobscura pseudoobscura (Fruit fly), this protein is Eukaryotic translation initiation factor 3 subunit H.